Here is a 279-residue protein sequence, read N- to C-terminus: Protease HtpX homolog (279 aa).

Transmembrane regions (helical) follow at residues 6 to 26 (TVAL…MMGG) and 28 to 48 (GGAL…YWFS). Zn(2+) is bound at residue His127. Glu128 is a catalytic residue. A Zn(2+)-binding site is contributed by His131. 2 helical membrane passes run 137-157 (ILIG…AHMA) and 177-197 (LGLL…QMAI). Glu202 is a Zn(2+) binding site.

Belongs to the peptidase M48B family. Zn(2+) serves as cofactor.

It localises to the cell inner membrane. The protein is Protease HtpX homolog of Syntrophotalea carbinolica (strain DSM 2380 / NBRC 103641 / GraBd1) (Pelobacter carbinolicus).